The primary structure comprises 197 residues: MAKLYFRYSAMDAGKTLDLLKVAYNYEDRGRKPLVLTSAIDKRAGLNKVKSRIGIDQDAYSLTDRDNIFEFVENYNSSNKIDCVLIDEIHFFTQEQVWQLAEIVDELNIPVICYGLRTNYLGQPFETAALLLAIADTLEEVKTICHCGKKASFNMMVQNGKAIKQGNPIVVDDDSLKEIDTKYVSVCRKHWKEGVYE.

ATP is bound by residues 9-16 (SAMDAGKT) and 87-90 (DEIH). The Proton acceptor role is filled by Glu88. Zn(2+) contacts are provided by Cys145, Cys147, Cys187, and His190.

The protein belongs to the thymidine kinase family. As to quaternary structure, homotetramer.

It is found in the cytoplasm. It carries out the reaction thymidine + ATP = dTMP + ADP + H(+). The polypeptide is Thymidine kinase (Francisella tularensis subsp. holarctica (strain LVS)).